A 251-amino-acid chain; its full sequence is Vacuolar protein sorting-associated protein 37D (251 aa).

One can recognise a VPS37 C-terminal domain in the interval A93–A182. The interval R174–R251 is disordered. Over residues P221–R251 the composition is skewed to pro residues.

Belongs to the VPS37 family. Component of the ESCRT-I complex (endosomal sorting complex required for transport I) which consists of TSG101, VPS28, a VPS37 protein (VPS37A to -D) and MVB12A or MVB12B in a 1:1:1:1 stoichiometry. Interacts with TSG101 and MVB12A. Component of the ESCRT-I complex (endosomal sorting complex required for transport I) which consists of TSG101, VPS28, a VPS37 protein (VPS37A to -D) and UBAP1 in a 1:1:1:1 stoichiometry.

It localises to the late endosome membrane. Its function is as follows. Component of the ESCRT-I complex, a regulator of vesicular trafficking process. Required for the sorting of endocytic ubiquitinated cargos into multivesicular bodies. May be involved in cell growth and differentiation. The protein is Vacuolar protein sorting-associated protein 37D of Homo sapiens (Human).